The primary structure comprises 221 residues: Proline-rich protein 20A (221 aa).

Disordered stretches follow at residues 1 to 103 (MEEP…QRQG) and 137 to 174 (SLSE…GPQA). Residues 42-53 (PAQPAQPAKPIA) are compositionally biased toward low complexity. The segment covering 63 to 72 (PARPESPPPA) has biased composition (pro residues). Basic residues predominate over residues 75–93 (GRRRGGSRRPGRGRGRRAG).

The protein belongs to the PRR20 family.

The sequence is that of Proline-rich protein 20A (PRR20A) from Homo sapiens (Human).